Consider the following 621-residue polypeptide: Chaperone protein HscA homolog (621 aa).

Belongs to the heat shock protein 70 family.

Functionally, chaperone involved in the maturation of iron-sulfur cluster-containing proteins. Has a low intrinsic ATPase activity which is markedly stimulated by HscB. This Polynucleobacter asymbioticus (strain DSM 18221 / CIP 109841 / QLW-P1DMWA-1) (Polynucleobacter necessarius subsp. asymbioticus) protein is Chaperone protein HscA homolog.